The sequence spans 166 residues: Cyclic pyranopterin monophosphate synthase (166 aa).

Substrate-binding positions include 75-77 and 113-114; these read LCH and ME. The active site involves Asp128.

Belongs to the MoaC family. As to quaternary structure, homohexamer; trimer of dimers.

The enzyme catalyses (8S)-3',8-cyclo-7,8-dihydroguanosine 5'-triphosphate = cyclic pyranopterin phosphate + diphosphate. The protein operates within cofactor biosynthesis; molybdopterin biosynthesis. Its function is as follows. Catalyzes the conversion of (8S)-3',8-cyclo-7,8-dihydroguanosine 5'-triphosphate to cyclic pyranopterin monophosphate (cPMP). This chain is Cyclic pyranopterin monophosphate synthase, found in Thermomicrobium roseum (strain ATCC 27502 / DSM 5159 / P-2).